Reading from the N-terminus, the 296-residue chain is Bifunctional protein FolD (296 aa).

NADP(+) contacts are provided by residues 166–168 (GRS), Ser-191, and Ile-232.

The protein belongs to the tetrahydrofolate dehydrogenase/cyclohydrolase family. In terms of assembly, homodimer.

It catalyses the reaction (6R)-5,10-methylene-5,6,7,8-tetrahydrofolate + NADP(+) = (6R)-5,10-methenyltetrahydrofolate + NADPH. The enzyme catalyses (6R)-5,10-methenyltetrahydrofolate + H2O = (6R)-10-formyltetrahydrofolate + H(+). It participates in one-carbon metabolism; tetrahydrofolate interconversion. Functionally, catalyzes the oxidation of 5,10-methylenetetrahydrofolate to 5,10-methenyltetrahydrofolate and then the hydrolysis of 5,10-methenyltetrahydrofolate to 10-formyltetrahydrofolate. This chain is Bifunctional protein FolD, found in Cereibacter sphaeroides (strain ATCC 17029 / ATH 2.4.9) (Rhodobacter sphaeroides).